The chain runs to 205 residues: GTP cyclohydrolase-2 (205 aa).

A GTP-binding site is contributed by 49 to 53; it reads RLHSE. Zn(2+) is bound by residues Cys-54, Cys-65, and Cys-67. Residues Gln-70, 92–94, and Thr-114 each bind GTP; that span reads EGR. Asp-126 functions as the Proton acceptor in the catalytic mechanism. Residue Arg-128 is the Nucleophile of the active site. GTP is bound by residues Thr-149 and Lys-154.

The protein belongs to the GTP cyclohydrolase II family. Zn(2+) is required as a cofactor.

The enzyme catalyses GTP + 4 H2O = 2,5-diamino-6-hydroxy-4-(5-phosphoribosylamino)-pyrimidine + formate + 2 phosphate + 3 H(+). It functions in the pathway cofactor biosynthesis; riboflavin biosynthesis; 5-amino-6-(D-ribitylamino)uracil from GTP: step 1/4. Functionally, catalyzes the conversion of GTP to 2,5-diamino-6-ribosylamino-4(3H)-pyrimidinone 5'-phosphate (DARP), formate and pyrophosphate. The protein is GTP cyclohydrolase-2 of Pseudomonas aeruginosa (strain LESB58).